Consider the following 190-residue polypeptide: Holliday junction branch migration complex subunit RuvA (190 aa).

A domain I region spans residues 1–65 (MIGTLSGTVE…DGVSQLYGFA (65 aa)). The interval 66–137 (NREEQNCMRM…LTPQVQKFEL (72 aa)) is domain II. The segment at 137–141 (LNRFA) is flexible linker. The segment at 142-190 (ATTRTDSEAVAALLSLGYERTAALGALQKVGVCDSTEDAVRRALLELSK) is domain III.

Belongs to the RuvA family. As to quaternary structure, homotetramer. Forms an RuvA(8)-RuvB(12)-Holliday junction (HJ) complex. HJ DNA is sandwiched between 2 RuvA tetramers; dsDNA enters through RuvA and exits via RuvB. An RuvB hexamer assembles on each DNA strand where it exits the tetramer. Each RuvB hexamer is contacted by two RuvA subunits (via domain III) on 2 adjacent RuvB subunits; this complex drives branch migration. In the full resolvosome a probable DNA-RuvA(4)-RuvB(12)-RuvC(2) complex forms which resolves the HJ.

It is found in the cytoplasm. The RuvA-RuvB-RuvC complex processes Holliday junction (HJ) DNA during genetic recombination and DNA repair, while the RuvA-RuvB complex plays an important role in the rescue of blocked DNA replication forks via replication fork reversal (RFR). RuvA specifically binds to HJ cruciform DNA, conferring on it an open structure. The RuvB hexamer acts as an ATP-dependent pump, pulling dsDNA into and through the RuvAB complex. HJ branch migration allows RuvC to scan DNA until it finds its consensus sequence, where it cleaves and resolves the cruciform DNA. This Anaplasma marginale (strain Florida) protein is Holliday junction branch migration complex subunit RuvA.